The following is a 348-amino-acid chain: Holliday junction branch migration complex subunit RuvB (348 aa).

Residues Thr-4–Tyr-184 form a large ATPase domain (RuvB-L) region. Residues Ile-23, Arg-24, Gly-65, Lys-68, Thr-69, Thr-70, Glu-131–Phe-133, Arg-174, Tyr-184, and Arg-221 each bind ATP. A Mg(2+)-binding site is contributed by Thr-69. The small ATPAse domain (RuvB-S) stretch occupies residues Ser-185–Asp-255. The tract at residues Glu-258–Glu-348 is head domain (RuvB-H). The DNA site is built by Arg-294, Arg-313, and Arg-318.

The protein belongs to the RuvB family. Homohexamer. Forms an RuvA(8)-RuvB(12)-Holliday junction (HJ) complex. HJ DNA is sandwiched between 2 RuvA tetramers; dsDNA enters through RuvA and exits via RuvB. An RuvB hexamer assembles on each DNA strand where it exits the tetramer. Each RuvB hexamer is contacted by two RuvA subunits (via domain III) on 2 adjacent RuvB subunits; this complex drives branch migration. In the full resolvosome a probable DNA-RuvA(4)-RuvB(12)-RuvC(2) complex forms which resolves the HJ.

It is found in the cytoplasm. It carries out the reaction ATP + H2O = ADP + phosphate + H(+). Its function is as follows. The RuvA-RuvB-RuvC complex processes Holliday junction (HJ) DNA during genetic recombination and DNA repair, while the RuvA-RuvB complex plays an important role in the rescue of blocked DNA replication forks via replication fork reversal (RFR). RuvA specifically binds to HJ cruciform DNA, conferring on it an open structure. The RuvB hexamer acts as an ATP-dependent pump, pulling dsDNA into and through the RuvAB complex. RuvB forms 2 homohexamers on either side of HJ DNA bound by 1 or 2 RuvA tetramers; 4 subunits per hexamer contact DNA at a time. Coordinated motions by a converter formed by DNA-disengaged RuvB subunits stimulates ATP hydrolysis and nucleotide exchange. Immobilization of the converter enables RuvB to convert the ATP-contained energy into a lever motion, pulling 2 nucleotides of DNA out of the RuvA tetramer per ATP hydrolyzed, thus driving DNA branch migration. The RuvB motors rotate together with the DNA substrate, which together with the progressing nucleotide cycle form the mechanistic basis for DNA recombination by continuous HJ branch migration. Branch migration allows RuvC to scan DNA until it finds its consensus sequence, where it cleaves and resolves cruciform DNA. This chain is Holliday junction branch migration complex subunit RuvB, found in Pseudomonas entomophila (strain L48).